The sequence spans 169 residues: uncharacterized protein (169 aa).

2 disordered regions span residues 32-53 (VSGPDWNPNTSQPMPGSPAPAP) and 148-169 (VSGSRGREGRLRPQCAGSAGGA).

This is an uncharacterized protein from Homo sapiens (Human).